The following is a 157-amino-acid chain: Protein-export protein SecB (157 aa).

It belongs to the SecB family. In terms of assembly, homotetramer, a dimer of dimers. One homotetramer interacts with 1 SecA dimer.

Its subcellular location is the cytoplasm. In terms of biological role, one of the proteins required for the normal export of preproteins out of the cell cytoplasm. It is a molecular chaperone that binds to a subset of precursor proteins, maintaining them in a translocation-competent state. It also specifically binds to its receptor SecA. The polypeptide is Protein-export protein SecB (Shewanella oneidensis (strain ATCC 700550 / JCM 31522 / CIP 106686 / LMG 19005 / NCIMB 14063 / MR-1)).